The following is a 156-amino-acid chain: ATP synthase subunit b (156 aa).

Residues 7–27 (FFAQMVVFFILWWVVAKFIWP) traverse the membrane as a helical segment.

The protein belongs to the ATPase B chain family. In terms of assembly, F-type ATPases have 2 components, F(1) - the catalytic core - and F(0) - the membrane proton channel. F(1) has five subunits: alpha(3), beta(3), gamma(1), delta(1), epsilon(1). F(0) has three main subunits: a(1), b(2) and c(10-14). The alpha and beta chains form an alternating ring which encloses part of the gamma chain. F(1) is attached to F(0) by a central stalk formed by the gamma and epsilon chains, while a peripheral stalk is formed by the delta and b chains.

Its subcellular location is the cell inner membrane. In terms of biological role, f(1)F(0) ATP synthase produces ATP from ADP in the presence of a proton or sodium gradient. F-type ATPases consist of two structural domains, F(1) containing the extramembraneous catalytic core and F(0) containing the membrane proton channel, linked together by a central stalk and a peripheral stalk. During catalysis, ATP synthesis in the catalytic domain of F(1) is coupled via a rotary mechanism of the central stalk subunits to proton translocation. Component of the F(0) channel, it forms part of the peripheral stalk, linking F(1) to F(0). The polypeptide is ATP synthase subunit b (Cupriavidus metallidurans (strain ATCC 43123 / DSM 2839 / NBRC 102507 / CH34) (Ralstonia metallidurans)).